The sequence spans 1021 residues: Sodium/potassium-transporting ATPase subunit alpha-1 (1021 aa).

A propeptide spanning residues 1–5 (MGKGA) is cleaved from the precursor. The segment covering 1–11 (MGKGAGRDKYE) has biased composition (basic and acidic residues). The tract at residues 1-31 (MGKGAGRDKYEPTATSEHGTKKKKAKERDMD) is disordered. Residues 6–85 (GRDKYEPTAT…NTLTPPPTTP (80 aa)) lie on the Cytoplasmic side of the membrane. Tyrosine 10 carries the phosphotyrosine modification. The residue at position 16 (serine 16) is a Phosphoserine; by PKC. The tract at residues 80 to 82 (PPP) is phosphoinositide-3 kinase binding. A helical membrane pass occupies residues 86 to 106 (EWVKFCRQLFGGFSLLLWIGS). Topologically, residues 107–129 (LLCFLAYGITSVMEGEPNSDNLY) are extracellular. A helical membrane pass occupies residues 130–150 (LGVVLAAVVIITGCFSYYQEA). The Cytoplasmic segment spans residues 151-286 (KSSKIMESFK…GGKTPIAMEI (136 aa)). The segment at 214-233 (SSLTGESEPQTRSPDFSNEN) is disordered. Residues 287–306 (EHFIHLITGVAVFLGVSFFI) form a helical membrane-spanning segment. Residues 307–318 (LSLILEYTWLEA) lie on the Extracellular side of the membrane. The chain crosses the membrane as a helical span at residues 319–336 (VIFLIGIIVANVPEGLLA). The Cytoplasmic segment spans residues 337–770 (TVTVCLTLTA…EEGRLIFDNL (434 aa)). Aspartate 374 (4-aspartylphosphate intermediate) is an active-site residue. Lysine 485 lines the ATP pocket. Residues aspartate 715 and aspartate 719 each contribute to the Mg(2+) site. The chain crosses the membrane as a helical span at residues 771–790 (KKSIAYTLTSNIPEITPFLI). Residues 791 to 800 (FIIANIPLPL) lie on the Extracellular side of the membrane. The helical transmembrane segment at 801–821 (GTCTILCIDLGTDMVPAISLA) threads the bilayer. At 822-841 (YEQAESDIMKRQPRNPKTDK) the chain is on the cytoplasmic side. Residues 842 to 864 (LVNERLISMAYGQIGMIQALGGF) traverse the membrane as a helical segment. Residues 865 to 916 (FTYFVIMAENGFLPSGLVGIRLQWDDRWINDVEDSYGQQWTFEQRKIVEFTC) lie on the Extracellular side of the membrane. The helical transmembrane segment at 917 to 936 (HTAFFVSIVVVQWADLIICK) threads the bilayer. At 937-949 (TRRNSVFQQGMKN) the chain is on the cytoplasmic side. At serine 941 the chain carries Phosphoserine; by PKA. A helical transmembrane segment spans residues 950–968 (KILIFGLFEETALAAFLSY). Topologically, residues 969–983 (CPGMDVALRMYPLKP) are extracellular. A helical transmembrane segment spans residues 984 to 1004 (TWWFCAFPYSLLIFLYDEIRK). The Cytoplasmic portion of the chain corresponds to 1005-1021 (LIIRRNPGGWVERETYY).

The protein belongs to the cation transport ATPase (P-type) (TC 3.A.3) family. Type IIC subfamily. As to quaternary structure, the sodium/potassium-transporting ATPase is composed of a catalytic alpha subunit, an auxiliary non-catalytic beta subunit and an additional regulatory subunit. In terms of processing, phosphorylation on Tyr-10 modulates pumping activity.

It localises to the cell membrane. The protein localises to the sarcolemma. It carries out the reaction K(+)(out) + Na(+)(in) + ATP + H2O = K(+)(in) + Na(+)(out) + ADP + phosphate + H(+). This is the catalytic component of the active enzyme, which catalyzes the hydrolysis of ATP coupled with the exchange of sodium and potassium ions across the plasma membrane. This action creates the electrochemical gradient of sodium and potassium ions, providing the energy for active transport of various nutrients. In Gallus gallus (Chicken), this protein is Sodium/potassium-transporting ATPase subunit alpha-1 (ATP1A1).